Consider the following 446-residue polypeptide: UDP-N-acetylglucosamine--dolichyl-phosphate N-acetylglucosaminephosphotransferase (446 aa).

2 helical membrane passes run M1 to Q21 and P25 to P45. Residues K59 to M61 and E71 contribute to the UDP-N-acetyl-alpha-D-glucosamine site. The next 2 helical transmembrane spans lie at M73–F93 and L123–L143. A dolichyl phosphate-binding site is contributed by K154. 2 helical membrane passes run F155–V175 and S191–P211. I208–I216 is a binding site for dolichyl phosphate. N215 contributes to the Mg(2+) binding site. 4 helical membrane passes run I216–A236, A254–K274, V282–L302, and L311–V331. N221 contacts UDP-N-acetyl-alpha-D-glucosamine. Mg(2+) is bound at residue D286. Position 335–337 (R335–R337) interacts with UDP-N-acetyl-alpha-D-glucosamine. Residue N395 is glycosylated (N-linked (GlcNAc...) asparagine). A helical membrane pass occupies residues D412–I432.

This sequence belongs to the glycosyltransferase 4 family. The cofactor is Mg(2+).

It is found in the endoplasmic reticulum membrane. The catalysed reaction is a di-trans,poly-cis-dolichyl phosphate + UDP-N-acetyl-alpha-D-glucosamine = an N-acetyl-alpha-D-glucosaminyl-diphospho-di-trans,poly-cis-dolichol + UMP. It functions in the pathway protein modification; protein glycosylation. Inhibited by natural nucleoside antibiotic tunicamycin, which acts as a structural analog and competitor of UDP-GlcNAc. Its function is as follows. UDP-N-acetylglucosamine--dolichyl-phosphate N-acetylglucosaminephosphotransferase that operates in the biosynthetic pathway of dolichol-linked oligosaccharides, the glycan precursors employed in protein asparagine (N)-glycosylation. The assembly of dolichol-linked oligosaccharides begins on the cytosolic side of the endoplasmic reticulum membrane and finishes in its lumen. The sequential addition of sugars to dolichol pyrophosphate produces dolichol-linked oligosaccharides containing fourteen sugars, including two GlcNAcs, nine mannoses and three glucoses. Once assembled, the oligosaccharide is transferred from the lipid to nascent proteins by oligosaccharyltransferases. Catalyzes the initial step of dolichol-linked oligosaccharide biosynthesis, transfering GlcNAc-1-P from cytosolic UDP-GlcNAc onto the carrier lipid dolichyl phosphate (P-dolichol), yielding GlcNAc-P-P-dolichol embedded in the cytoplasmic leaflet of the endoplasmic reticulum membrane. In Schizosaccharomyces pombe (strain 972 / ATCC 24843) (Fission yeast), this protein is UDP-N-acetylglucosamine--dolichyl-phosphate N-acetylglucosaminephosphotransferase (gpt2).